The primary structure comprises 56 residues: Large ribosomal subunit protein bL33 (56 aa).

This sequence belongs to the bacterial ribosomal protein bL33 family.

The chain is Large ribosomal subunit protein bL33 from Rickettsia bellii (strain OSU 85-389).